Consider the following 361-residue polypeptide: Outer mitochondrial transmembrane helix translocase (361 aa).

The Mitochondrial intermembrane portion of the chain corresponds to 1–15; that stretch reads MVHAETFSRPLSRNE. A helical membrane pass occupies residues 16-32; that stretch reads VVGLIFRLTIFGAVTYF. The Cytoplasmic portion of the chain corresponds to 33 to 361; that stretch reads TIKWMVDAID…QNVLTHVCLD (329 aa). 133 to 140 is an ATP binding site; that stretch reads GPPGCGKT. Residue serine 322 is modified to Phosphoserine.

This sequence belongs to the AAA ATPase family. MSP1 subfamily. In terms of assembly, interacts with GRIA2 and GRIP1 in an ATP-dependent manner. ATAD1-catalyzed ATP hydrolysis disrupts not only its binding to GRIA2 and GRIP1, but also interaction between GRIP1 and GRIA2, leading to AMPAR complex disassembly.

The protein resides in the mitochondrion outer membrane. It is found in the peroxisome membrane. It localises to the postsynaptic cell membrane. It catalyses the reaction [protein]-with a C-terminal TM segment(out) + ATP + H2O = [protein]-with a C-terminal TM segment(in) + ADP + phosphate + H(+). Its function is as follows. Outer mitochondrial translocase required to remove mislocalized tail-anchored transmembrane proteins on mitochondria. Specifically recognizes and binds tail-anchored transmembrane proteins: acts as a dislocase that mediates the ATP-dependent extraction of mistargeted tail-anchored transmembrane proteins from the mitochondrion outer membrane. Also plays a critical role in regulating the surface expression of AMPA receptors (AMPAR), thereby regulating synaptic plasticity and learning and memory. Required for NMDA-stimulated AMPAR internalization and inhibition of GRIA1 and GRIA2 recycling back to the plasma membrane; these activities are ATPase-dependent. The protein is Outer mitochondrial transmembrane helix translocase of Bos taurus (Bovine).